Consider the following 592-residue polypeptide: Prospero homeobox protein 2 (592 aa).

5 disordered regions span residues 20-56 (EACT…PEWF), 85-129 (GNAQ…RKGG), 155-218 (KPRD…LPSG), 308-336 (RLDS…PLTA), and 353-382 (RYNN…LRPW). Residues 95–106 (CPKKARERKRKQ) show a composition bias toward basic residues. The span at 201–211 (SGAEKHQESEK) shows a compositional bias: basic and acidic residues. The segment covering 314–331 (YPIPPRMTPKPCQDPPAN) has biased composition (pro residues). A compositionally biased stretch (low complexity) spans 360–377 (SSSPPQDSSSQRHPSSEP). The 59-residue stretch at 437-495 (QEGLNPGHLKKAKLMFFFTRYPSSNLLKVYFPDVQFNRCITSQMIKWFSNFREFYYIQM) folds into the Prospero-type homeo domain. A homeo-Prospero region spans residues 437–592 (QEGLNPGHLK…EIFKSSSYPQ (156 aa)). The region spanning 496–592 (EKSARQAISD…EIFKSSSYPQ (97 aa)) is the Prospero domain.

The protein belongs to the Prospero homeodomain family.

It localises to the nucleus. Transcription regulator. Does not seem to be essential for embryonic development and postnatal survival. The sequence is that of Prospero homeobox protein 2 (PROX2) from Homo sapiens (Human).